The primary structure comprises 453 residues: Acid phosphatase (453 aa).

Residues 1 to 18 (MFLQNLFLGFLAVVCANA) form the signal peptide. His-69 functions as the Nucleophile in the catalytic mechanism. N-linked (GlcNAc...) asparagine glycosylation is found at Asn-95, Asn-151, Asn-183, Asn-193, Asn-243, and Asn-319. Asp-331 serves as the catalytic Proton donor. 3 N-linked (GlcNAc...) asparagine glycosylation sites follow: Asn-410, Asn-429, and Asn-443.

The protein belongs to the histidine acid phosphatase family.

The protein resides in the secreted. It localises to the cell wall. It carries out the reaction a phosphate monoester + H2O = an alcohol + phosphate. This chain is Acid phosphatase (pho1), found in Schizosaccharomyces pombe (strain 972 / ATCC 24843) (Fission yeast).